A 101-amino-acid polypeptide reads, in one-letter code: Nucleoid-associated protein Bind_0255 (101 aa).

This sequence belongs to the YbaB/EbfC family. As to quaternary structure, homodimer.

It is found in the cytoplasm. The protein localises to the nucleoid. In terms of biological role, binds to DNA and alters its conformation. May be involved in regulation of gene expression, nucleoid organization and DNA protection. The sequence is that of Nucleoid-associated protein Bind_0255 from Beijerinckia indica subsp. indica (strain ATCC 9039 / DSM 1715 / NCIMB 8712).